Consider the following 475-residue polypeptide: UDP-N-acetylmuramate--L-alanine ligase (475 aa).

ATP is bound at residue 121-127 (GTHGKTT).

The protein belongs to the MurCDEF family.

Its subcellular location is the cytoplasm. It carries out the reaction UDP-N-acetyl-alpha-D-muramate + L-alanine + ATP = UDP-N-acetyl-alpha-D-muramoyl-L-alanine + ADP + phosphate + H(+). The protein operates within cell wall biogenesis; peptidoglycan biosynthesis. Its function is as follows. Cell wall formation. The sequence is that of UDP-N-acetylmuramate--L-alanine ligase from Salinibacter ruber (strain DSM 13855 / M31).